Here is a 1224-residue protein sequence, read N- to C-terminus: MLTKFETKSARVKGLSFHPKRPWILTSLHNGVIQLWDYRMCTLIDKFDEHDGPVRGIDFHKQQPLFVSGGDDYKIKVWNYKLRRCLFTLLGHLDYIRTTFFHHEYPWILSASDDQTIRVWNWQSRTCVCVLTGHNHYVMCAQFHPSEDLVVSASLDQTVRVWDISGLRKKNLSPGAVESDVRGITGVDLFGTTDAVVKHVLEGHDRGVNWAAFHPTMPLIVSGADDRQVKIWRMNESKAWEVDTCRGHYNNVSCAVFHPRQELILSNSEDKSIRVWDMSKRTGVQTFRRDHDRFWVLAAHPNLNLFAAGHDGGMIVFKLERERPAYAVHGNMLHYVKDRFLRQLDFNSSKDVAVMQLRSGSKFPVFSMSYNPAENAVLLCTRASNLENSTYDLYTIPKDADTQNPDAPEGKRSSGLTAVWVARNRFAVLDRMHSLLIKNLKNEITKKVQVPNCDEIFYAGTGNLLLRDAESITLFDVQQKRTLASVKISKVKYVIWSADMSHVALLAKHAIVICNRKLEALCNIHENIRVKSGAWDESGVFIYTTSNHIKYAVTTGDYGIIRTLDLPIYVTRVKGNNVYCLDRECRPRVLTIDPTEFKFKLALINRKYDEVLHMVRNAKLVGQSIIAYLQKKGYPEVALHFVKDEKTRFSLALECGNIEIALEAAKALDDKNCWEKLGEVALLQGNHQIVEMCYQRTKNFDKLSFLYLITGNLEKLRKMMKIAEIRKDMSGHYQNALYLGDVSERVRILKNCGQKSLAYLTAATHGLDEEAESLKETFDPEKETIPDIDPNAKLLQPPAPIMPLDTNWPLLTVSKGFFEGSIASKGKGGALAADIDIDTVGTEGWGEDAELQLDEDGFVEATEGLGDDALGKGQEEGGGWDVEEDLELPPELDIPPGAAGGAEDGFFVPPTKGTSPTQIWCNNSQLPVDHILAGSFETAMRLLHDQVGVTQFGPYKQLFLQTYARGRTTYQALPCLPSMYGYPNRNWKDAGLKNGVPAVGLKLNDLIQRLQLCYQLTTVGKFEEAVEKFRSILLSVPLLVVDNKQEIAEAQQLITICREYIVGLSMETERKKLPKETLEQQKRICEMAAYFTHSNLQPVHMILVLRTALNLFFKLKNFRTAAAFARRLLELGPKPEVAQQTRKILSACEKNPTDAYQLNYDMHNPFDICAASYRPIYRGKPVEKCPLSGACYSPEFKGQICKVTTVTEIGKDVIGLRISPLQFR.

WD repeat units follow at residues 7–37 (TKSARVKGLSFHPKRPWILTSLHNGVIQLWD), 49–79 (EHDGPVRGIDFHKQQPLFVSGGDDYKIKVWN), 91–121 (GHLDYIRTTFFHHEYPWILSASDDQTIRVWN), and 133–163 (GHNHYVMCAQFHPSEDLVVSASLDQTVRVWD). Ser-173 is subject to Phosphoserine. Phosphothreonine is present on Thr-185. WD repeat units lie at residues 203 to 233 (GHDRGVNWAAFHPTMPLIVSGADDRQVKIWR) and 247 to 277 (GHYNNVSCAVFHPRQELILSNSEDKSIRVWD). Thr-591 bears the Phosphothreonine mark. Omega-N-methylarginine is present on Arg-965. Ser-1193 carries the phosphoserine modification.

In terms of assembly, oligomeric complex that consists of at least the alpha, beta, beta', gamma, delta, epsilon and zeta subunits. Interacts with SCYL1. Interacts with JAGN1. Interacts with TMEM41B. Interacts with SVEP1. Probably interacts with PEX11A.

It localises to the cytoplasm. The protein localises to the golgi apparatus membrane. Its subcellular location is the cytoplasmic vesicle. It is found in the COPI-coated vesicle membrane. The protein resides in the secreted. In terms of biological role, the coatomer is a cytosolic protein complex that binds to dilysine motifs and reversibly associates with Golgi non-clathrin-coated vesicles, which further mediate biosynthetic protein transport from the ER, via the Golgi up to the trans Golgi network. Coatomer complex is required for budding from Golgi membranes, and is essential for the retrograde Golgi-to-ER transport of dilysine-tagged proteins. In mammals, the coatomer can only be recruited by membranes associated to ADP-ribosylation factors (ARFs), which are small GTP-binding proteins; the complex also influences the Golgi structural integrity, as well as the processing, activity, and endocytic recycling of LDL receptors. Xenin stimulates exocrine pancreatic secretion. It inhibits pentagastrin-stimulated secretion of acid, to induce exocrine pancreatic secretion and to affect small and large intestinal motility. In the gut, xenin interacts with the neurotensin receptor. The polypeptide is Coatomer subunit alpha (COPA) (Bos taurus (Bovine)).